The chain runs to 237 residues: Putative ATP-binding protein BMEII0108 (237 aa).

The 201-residue stretch at 5 to 205 (ISFNNVVMRY…DLPYPRTEAI (201 aa)) folds into the ABC transporter domain. 37-44 (GPSGCGKS) contributes to the ATP binding site.

This sequence belongs to the ABC transporter superfamily. The complex is composed of two ATP-binding proteins (BMEII0108), two transmembrane proteins (BMEII0107) and a solute-binding protein (BMEII0109).

The protein resides in the cell inner membrane. In terms of biological role, probably part of an ABC transporter complex. Probably Responsible for energy coupling to the transport system. In Brucella melitensis biotype 1 (strain ATCC 23456 / CCUG 17765 / NCTC 10094 / 16M), this protein is Putative ATP-binding protein BMEII0108.